The following is a 192-amino-acid chain: Archaemetzincin (192 aa).

Zn(2+) is bound at residue His-137. The active-site Proton acceptor is Glu-138. Residues His-141, His-147, Cys-148, Cys-153, Cys-172, and Cys-175 each coordinate Zn(2+).

It belongs to the peptidase M54 family. Monomer. Requires Zn(2+) as cofactor.

Its function is as follows. Probable zinc metalloprotease whose natural substrate is unknown. The polypeptide is Archaemetzincin (Pyrococcus furiosus (strain ATCC 43587 / DSM 3638 / JCM 8422 / Vc1)).